The following is a 156-amino-acid chain: Protein-export protein SecB (156 aa).

The protein belongs to the SecB family. Homotetramer, a dimer of dimers. One homotetramer interacts with 1 SecA dimer.

It localises to the cytoplasm. Functionally, one of the proteins required for the normal export of preproteins out of the cell cytoplasm. It is a molecular chaperone that binds to a subset of precursor proteins, maintaining them in a translocation-competent state. It also specifically binds to its receptor SecA. The protein is Protein-export protein SecB of Pectobacterium carotovorum subsp. carotovorum (strain PC1).